Consider the following 178-residue polypeptide: Large ribosomal subunit protein uL6 (178 aa).

This sequence belongs to the universal ribosomal protein uL6 family. In terms of assembly, part of the 50S ribosomal subunit.

This protein binds to the 23S rRNA, and is important in its secondary structure. It is located near the subunit interface in the base of the L7/L12 stalk, and near the tRNA binding site of the peptidyltransferase center. In Nitratiruptor sp. (strain SB155-2), this protein is Large ribosomal subunit protein uL6.